Consider the following 345-residue polypeptide: S-adenosylmethionine:tRNA ribosyltransferase-isomerase (345 aa).

This sequence belongs to the QueA family. Monomer.

The protein resides in the cytoplasm. It carries out the reaction 7-aminomethyl-7-carbaguanosine(34) in tRNA + S-adenosyl-L-methionine = epoxyqueuosine(34) in tRNA + adenine + L-methionine + 2 H(+). It participates in tRNA modification; tRNA-queuosine biosynthesis. Transfers and isomerizes the ribose moiety from AdoMet to the 7-aminomethyl group of 7-deazaguanine (preQ1-tRNA) to give epoxyqueuosine (oQ-tRNA). The sequence is that of S-adenosylmethionine:tRNA ribosyltransferase-isomerase from Helicobacter pylori (strain ATCC 700392 / 26695) (Campylobacter pylori).